The sequence spans 275 residues: 3-methyl-2-oxobutanoate hydroxymethyltransferase (275 aa).

Mg(2+) contacts are provided by D49 and D88. 3-methyl-2-oxobutanoate contacts are provided by residues 49–50, D88, and K118; that span reads DS. E120 provides a ligand contact to Mg(2+). E187 acts as the Proton acceptor in catalysis.

It belongs to the PanB family. In terms of assembly, homodecamer; pentamer of dimers. It depends on Mg(2+) as a cofactor.

It localises to the cytoplasm. It catalyses the reaction 3-methyl-2-oxobutanoate + (6R)-5,10-methylene-5,6,7,8-tetrahydrofolate + H2O = 2-dehydropantoate + (6S)-5,6,7,8-tetrahydrofolate. The protein operates within cofactor biosynthesis; (R)-pantothenate biosynthesis; (R)-pantoate from 3-methyl-2-oxobutanoate: step 1/2. In terms of biological role, catalyzes the reversible reaction in which hydroxymethyl group from 5,10-methylenetetrahydrofolate is transferred onto alpha-ketoisovalerate to form ketopantoate. The polypeptide is 3-methyl-2-oxobutanoate hydroxymethyltransferase (Brucella melitensis biotype 1 (strain ATCC 23456 / CCUG 17765 / NCTC 10094 / 16M)).